A 263-amino-acid chain; its full sequence is ABC transporter I family member 17 (263 aa).

An ABC transporter domain is found at 29 to 260; that stretch reads IRVHDLTRVA…THPMAQRFLQ (232 aa). Residue 62–69 participates in ATP binding; sequence GPSGSGKS.

This sequence belongs to the ABC transporter superfamily. ABCI family.

This Arabidopsis thaliana (Mouse-ear cress) protein is ABC transporter I family member 17 (ABCI17).